The chain runs to 106 residues: MSEETTVRPERTERSERPERPQYRGNGPRKRRPFQRRKVCRFCADKDLVIDYKDPRVLRSFITERGKIVPRRISGNCSKHQREITEAIKRARNIALIPIASTHVVA.

A compositionally biased stretch (basic and acidic residues) spans 1–22; it reads MSEETTVRPERTERSERPERPQ. The tract at residues 1-34 is disordered; it reads MSEETTVRPERTERSERPERPQYRGNGPRKRRPF.

Belongs to the bacterial ribosomal protein bS18 family. As to quaternary structure, part of the 30S ribosomal subunit. Forms a tight heterodimer with protein bS6.

In terms of biological role, binds as a heterodimer with protein bS6 to the central domain of the 16S rRNA, where it helps stabilize the platform of the 30S subunit. The protein is Small ribosomal subunit protein bS18 of Geobacter metallireducens (strain ATCC 53774 / DSM 7210 / GS-15).